Reading from the N-terminus, the 296-residue chain is Probable 2-(5''-triphosphoribosyl)-3'-dephosphocoenzyme-A synthase (296 aa).

The protein belongs to the CitG/MdcB family.

The catalysed reaction is 3'-dephospho-CoA + ATP = 2'-(5''-triphospho-alpha-D-ribosyl)-3'-dephospho-CoA + adenine. This is Probable 2-(5''-triphosphoribosyl)-3'-dephosphocoenzyme-A synthase from Streptococcus mutans serotype c (strain ATCC 700610 / UA159).